Here is a 489-residue protein sequence, read N- to C-terminus: Cytochrome P450 monooxygenase ataF (489 aa).

The helical transmembrane segment at 12–32 threads the bilayer; that stretch reads WLEHSAVIATLFAFGTALFLV. The N-linked (GlcNAc...) asparagine glycan is linked to Asn-289. Cys-434 is a heme binding site.

Belongs to the cytochrome P450 family. Heme is required as a cofactor.

It localises to the membrane. The protein operates within mycotoxin biosynthesis. In terms of biological role, cytochrome P450 monooxygenase; part of the gene cluster that mediates the biosynthesis of acetylaranotin, a member of the epipolythiodioxopiperazine (ETP) class of toxins characterized by a disulfide-bridged cyclic dipeptide. The first step of acetylaranotin biosynthesis is performed by the NRPS ataP which produces diketopiperazine cyclo-L-Phe-L-Phe via the condensation of 2 phenylalanines (L-Phe). The ataC domain of ataTC then catalyzes the formation of bishydroxylation of cyclo-L-Phe-L-Phe. The glutathione S-transferase domain ataG in ataIMG further catalyzes the conjugation of two glutathiones to the bishydroxylated intermediate. Next, the dipeptidase ataJ removes the Glu residues. The following step is performed by the carbon sulfur lyase domain ataI of ataIMG which may convert the bis-cysteinyl adduct to yield an epidithiol intermediate. The ataT domain from ataTC then catalyzes the oxidation of the free dithiols, followed by a cyclization step catalyzed by the cytochrome P450 ataF. AtaF probably acts as an epoxidase to promote a dual epoxidation formation at C8 and C9 along with C8' and C9', followed by the spontaneous nucleophilic attack of the amide nitrogens N10 and N10' to yield an intermediate with the pyrrolidine partial structure. The final steps of acetylaranotin biosynthesis involve the acetylation and ring rearrangement of an epitetrathiodiketopiperazine intermediate to produce acetylaranotin. AtaH probably catalyzes the acetylation of epitetrathiodiketopiperazine to produce a diacetate and ataY is responsible for the formation of the dihydrooxepin moiety that converts the diacetate intermediate to acetylaranotin via acetylapoaranotin. Both enzymes could function independently in the absence of the other. The acetylaranotin bis-thiomethyltransferase ataS located outside of acetylaranotin gene cluster is the main thiomethyltransferase responsible for converting acetylaranotin and its related intermediates to their methylated forms. The chain is Cytochrome P450 monooxygenase ataF from Aspergillus terreus (strain NIH 2624 / FGSC A1156).